Reading from the N-terminus, the 457-residue chain is tRNA modification GTPase MnmE (457 aa).

Residues Arg22, Glu83, and Arg122 each contribute to the (6S)-5-formyl-5,6,7,8-tetrahydrofolate site. Residues Gly219 to Phe378 form the TrmE-type G domain. A K(+)-binding site is contributed by Asn229. GTP-binding positions include Asn229–Ser234, Thr248–Thr254, and Asp273–Gly276. Position 233 (Ser233) interacts with Mg(2+). K(+) contacts are provided by Thr248, Ile250, and Thr253. Mg(2+) is bound at residue Thr254. Residue Lys457 participates in (6S)-5-formyl-5,6,7,8-tetrahydrofolate binding.

The protein belongs to the TRAFAC class TrmE-Era-EngA-EngB-Septin-like GTPase superfamily. TrmE GTPase family. Homodimer. Heterotetramer of two MnmE and two MnmG subunits. K(+) serves as cofactor.

It localises to the cytoplasm. Its function is as follows. Exhibits a very high intrinsic GTPase hydrolysis rate. Involved in the addition of a carboxymethylaminomethyl (cmnm) group at the wobble position (U34) of certain tRNAs, forming tRNA-cmnm(5)s(2)U34. The polypeptide is tRNA modification GTPase MnmE (Listeria welshimeri serovar 6b (strain ATCC 35897 / DSM 20650 / CCUG 15529 / CIP 8149 / NCTC 11857 / SLCC 5334 / V8)).